Reading from the N-terminus, the 230-residue chain is Aquaporin Z (230 aa).

A run of 2 helical transmembrane segments spans residues A9–A29 and I35–I55. An NPA 1 motif is present at residues N64–A66. Transmembrane regions (helical) follow at residues L83–I103, L131–G151, and G160–V180. The NPA 2 motif lies at N186–A188. The chain crosses the membrane as a helical span at residues A194 to I214.

The protein belongs to the MIP/aquaporin (TC 1.A.8) family. As to quaternary structure, homotetramer.

The protein localises to the cell inner membrane. It catalyses the reaction H2O(in) = H2O(out). In terms of biological role, channel that permits osmotically driven movement of water in both directions. It is involved in the osmoregulation and in the maintenance of cell turgor during volume expansion in rapidly growing cells. It mediates rapid entry or exit of water in response to abrupt changes in osmolarity. The polypeptide is Aquaporin Z (Pseudomonas putida (strain ATCC 47054 / DSM 6125 / CFBP 8728 / NCIMB 11950 / KT2440)).